The following is a 185-amino-acid chain: Ribosome-recycling factor (185 aa).

This sequence belongs to the RRF family.

It localises to the cytoplasm. Its function is as follows. Responsible for the release of ribosomes from messenger RNA at the termination of protein biosynthesis. May increase the efficiency of translation by recycling ribosomes from one round of translation to another. This Pseudomonas putida (strain ATCC 700007 / DSM 6899 / JCM 31910 / BCRC 17059 / LMG 24140 / F1) protein is Ribosome-recycling factor.